Here is a 728-residue protein sequence, read N- to C-terminus: MSDRIDRDVINALIAGHFADPFSVLGMHKTTAGLEVRALLPDATDVWVIEPKTGRKLAKLECLDSRGFFSGVIPRRKNFFRYQLAVVWHGQQNLIDDPYRFGPLIQEMDAWLLSEGTHLRPYETLGAHADTMDGVTGTRFSVWAPNARRVSVVGQFNYWDGRRHPMRLRKESGIWELFIPGAHNGQLYKYEMIDANGNLRLKSDPYAFEAQMRPETASLICGLPEKVVQTEERKKANQFDASISIYEVHLGSWRRHTDNNFWLSYRELADQLVPYAKWMGFTHLELLPINEHPFDGSWGYQPTGLYAPTRRFGTRDDFRYFIDAAHAAGLNVILDWVPGHFPTDDFALAEFDGTNLYEHSDPREGYHQDWNTLIYNYGRREVSNFLVGNALYWIERFGIDALRVDAVASMIYRDYSRKEGEWIPNEFGGRENLEAIEFLRNTNRILGEQVSGAVTMAEESTDFPGVSRPQDMGGLGFWYKWNLGWMHDTLDYMKLDPVYRQYHHDKLTFGILYNYTENFVLPLSHDEVVHGKKSILDRMPGDAWQKFANLRAYYGWMWAFPGKKLLFMGNEFAQGREWNHDASLDWHLLEGGDNWHHGVQRLVRDLNLTYRHHKAMHELDFDPYGFEWLVVDDKERSVLIFVRRDKEGNEIIVASNFTPVPRHDYRFGINQPGKWREILNTDSMHYHGSNAGNGGTVHSDEIASHGRQHSLSLTLPPLATIWLVREAE.

Residue D405 is the Nucleophile of the active site. E458 acts as the Proton donor in catalysis.

The protein belongs to the glycosyl hydrolase 13 family. GlgB subfamily. As to quaternary structure, monomer.

The catalysed reaction is Transfers a segment of a (1-&gt;4)-alpha-D-glucan chain to a primary hydroxy group in a similar glucan chain.. It participates in glycan biosynthesis; glycogen biosynthesis. Functionally, catalyzes the formation of the alpha-1,6-glucosidic linkages in glycogen by scission of a 1,4-alpha-linked oligosaccharide from growing alpha-1,4-glucan chains and the subsequent attachment of the oligosaccharide to the alpha-1,6 position. The polypeptide is 1,4-alpha-glucan branching enzyme GlgB (Shigella boydii serotype 4 (strain Sb227)).